Reading from the N-terminus, the 230-residue chain is uncharacterized protein (230 aa).

The tract at residues 1 to 57 (MPGPHSPNPGVGTNGPAPYPEPSSHEPQALDYPHDLGAAEPAFAPGPADDAALPPAA) is disordered. Residues 38 to 55 (AAEPAFAPGPADDAALPP) show a composition bias toward low complexity. A helical membrane pass occupies residues 75–95 (LLIGIVVALALVSAMTAAIIY).

It is found in the membrane. This is an uncharacterized protein from Mycobacterium tuberculosis (strain CDC 1551 / Oshkosh).